Consider the following 455-residue polypeptide: Guanine/hypoxanthine permease GhxQ (455 aa).

Residues 1–31 (MSGDILQTPDAPKPQGALDNYFKITARGSTV) lie on the Cytoplasmic side of the membrane. Residues 32–55 (RQEVLAGLTTFLAMVYSVIVVPGM) traverse the membrane as a helical segment. Over 56–65 (LGKAGFPPAA) the chain is Periplasmic. The chain crosses the membrane as a helical span at residues 66–84 (VFVATCLVAGFGSLLMGLW). The Cytoplasmic segment spans residues 85 to 86 (AN). Residues 87–103 (LPMAIGCAISLTAFTAF) form a discontinuously helical membrane-spanning segment. The Periplasmic portion of the chain corresponds to 104–115 (SLVLGQQISVPV). Residues 116–135 (ALGAVFLMGVIFTAISVTGV) form a helical membrane-spanning segment. Over 136 to 147 (RTWILRNLPMGI) the chain is Cytoplasmic. A helical membrane pass occupies residues 148 to 168 (AHGTGIGIGLFLLLIAANGVG). The Periplasmic portion of the chain corresponds to 169–186 (MVIKNPIEGLPVALGAFT). Residues 187 to 204 (SFPVMMSLLGLAVIFGLE) traverse the membrane as a helical segment. Topologically, residues 205 to 208 (KCRV) are cytoplasmic. A helical membrane pass occupies residues 209 to 228 (PGGILLVIIAISIIGLIFDP). Over 229–260 (AVKYHGLVAMPSLTGEDGKSLIFSLDIMGALQ) the chain is Periplasmic. A helical transmembrane segment spans residues 261–289 (PTVLPSVLALVMTAVFDATGTIRAVAGQA). Over 290-302 (NLLDKDNQIINGG) the chain is Cytoplasmic. Residues 303-318 (KALTSDSVSSIFSGLV) traverse the membrane as a helical segment. At 319–320 (GA) the chain is on the periplasmic side. Residues 321–336 (APAAVYIESAAGTAAG) traverse the membrane as a discontinuously helical segment. Residues 337–340 (GKTG) lie on the Cytoplasmic side of the membrane. Residues 341 to 355 (LTATVVGALFLLILF) traverse the membrane as a helical segment. At 356-366 (LSPLSFLIPGY) the chain is on the periplasmic side. The helical transmembrane segment at 367–386 (ATAPALMYVGLLMLSNVSKL) threads the bilayer. Over 387–391 (DFNDF) the chain is Cytoplasmic. Positions 392–427 (IDAMAGLVCAVFIVLTCNIVTGIMLGFVTLVVGRVF) form an intramembrane region, discontinuously helical. The Cytoplasmic segment spans residues 428-455 (AREWQKLNIGTVIITAALVAFYAGGWAI).

This sequence belongs to the nucleobase:cation symporter-2 (NCS2) (TC 2.A.40) family. Azg-like subfamily.

It localises to the cell membrane. In terms of biological role, high-affinity transporter for guanine and hypoxanthine. In Escherichia coli (strain K12), this protein is Guanine/hypoxanthine permease GhxQ (ghxQ).